Here is a 641-residue protein sequence, read N- to C-terminus: 1-deoxy-D-xylulose-5-phosphate synthase (641 aa).

Residues His-79 and 120–122 (GHS) each bind thiamine diphosphate. Asp-151 is a Mg(2+) binding site. Thiamine diphosphate-binding positions include 152–153 (GS), Asn-180, Tyr-291, and Glu-375. Asn-180 provides a ligand contact to Mg(2+).

It belongs to the transketolase family. DXPS subfamily. Homodimer. It depends on Mg(2+) as a cofactor. Thiamine diphosphate serves as cofactor.

It catalyses the reaction D-glyceraldehyde 3-phosphate + pyruvate + H(+) = 1-deoxy-D-xylulose 5-phosphate + CO2. It participates in metabolic intermediate biosynthesis; 1-deoxy-D-xylulose 5-phosphate biosynthesis; 1-deoxy-D-xylulose 5-phosphate from D-glyceraldehyde 3-phosphate and pyruvate: step 1/1. Catalyzes the acyloin condensation reaction between C atoms 2 and 3 of pyruvate and glyceraldehyde 3-phosphate to yield 1-deoxy-D-xylulose-5-phosphate (DXP). This Nitratidesulfovibrio vulgaris (strain ATCC 29579 / DSM 644 / CCUG 34227 / NCIMB 8303 / VKM B-1760 / Hildenborough) (Desulfovibrio vulgaris) protein is 1-deoxy-D-xylulose-5-phosphate synthase.